The following is a 278-amino-acid chain: tRNA(Phe) (4-demethylwyosine(37)-C(7)) aminocarboxypropyltransferase (278 aa).

S-adenosyl-L-methionine-binding positions include Ser-109, Arg-116, Glu-155, and 183–184; that span reads DN.

This sequence belongs to the class I-like SAM-binding methyltransferase superfamily. TRM5/TYW2 family.

The protein resides in the cytoplasm. It catalyses the reaction 4-demethylwyosine(37) in tRNA(Phe) + S-adenosyl-L-methionine = 4-demethyl-7-[(3S)-3-amino-3-carboxypropyl]wyosine(37) in tRNA(Phe) + S-methyl-5'-thioadenosine + H(+). S-adenosyl-L-methionine-dependent transferase that acts as a component of the wyosine derivatives biosynthesis pathway. Catalyzes the transfer of the alpha-amino-alpha-carboxypropyl (acp) group from S-adenosyl-L-methionine to 4-demethylwyosine (imG-14), forming 7-aminocarboxypropyl-demethylwyosine (wybutosine-86) at position 37 of tRNA(Phe). This Pyrococcus horikoshii (strain ATCC 700860 / DSM 12428 / JCM 9974 / NBRC 100139 / OT-3) protein is tRNA(Phe) (4-demethylwyosine(37)-C(7)) aminocarboxypropyltransferase.